The chain runs to 76 residues: ATP synthase subunit 9, mitochondrial (76 aa).

Helical transmembrane passes span 13–35 (GIST…ALIQ) and 50–72 (FAIL…SFLL).

This sequence belongs to the ATPase C chain family. In terms of assembly, F-type ATPases have 2 components, CF(1) - the catalytic core - and CF(0) - the membrane proton channel. In yeast, the dimeric form of ATP synthase consists of 18 polypeptides: alpha, beta, gamma, delta, epsilon, 4 (B), 5 (OSCP), 6 (A), 8, 9 (C), d, E (Tim11), f, g, h, i, j and k.

Its subcellular location is the mitochondrion membrane. Its function is as follows. Mitochondrial membrane ATP synthase (F(1)F(0) ATP synthase or Complex V) produces ATP from ADP in the presence of a proton gradient across the membrane which is generated by electron transport complexes of the respiratory chain. F-type ATPases consist of two structural domains, F(1) - containing the extramembraneous catalytic core and F(0) - containing the membrane proton channel, linked together by a central stalk and a peripheral stalk. During catalysis, ATP synthesis in the catalytic domain of F(1) is coupled via a rotary mechanism of the central stalk subunits to proton translocation. Part of the complex F(0) domain. A homomeric c-ring of probably 10 subunits is part of the complex rotary element. This Eremothecium gossypii (strain ATCC 10895 / CBS 109.51 / FGSC 9923 / NRRL Y-1056) (Yeast) protein is ATP synthase subunit 9, mitochondrial (ATP9).